We begin with the raw amino-acid sequence, 240 residues long: Fimbriae Y protein (240 aa).

It is found in the fimbrium. This Salmonella typhimurium (strain LT2 / SGSC1412 / ATCC 700720) protein is Fimbriae Y protein (fimY).